The following is a 1407-amino-acid chain: Probable phosphoribosylformylglycinamidine synthase, chloroplastic/mitochondrial (1407 aa).

A chloroplast and mitochondrion-targeting transit peptide spans methionine 1 to arginine 53. Residues glycine 407 to aspartate 418, glutamine 487 to tyrosine 489, and alanine 786 contribute to the ATP site. 4 residues coordinate Mg(2+): aspartate 787, glutamate 826, asparagine 830, and aspartate 989. Position 991 (serine 991) interacts with ATP. The Glutamine amidotransferase type-1 domain occupies lysine 1141–threonine 1381. Cysteine 1235 functions as the Nucleophile in the catalytic mechanism. Residues histidine 1366 and glutamate 1368 contribute to the active site.

In the N-terminal section; belongs to the FGAMS family.

Its subcellular location is the plastid. The protein localises to the chloroplast. It localises to the mitochondrion. It carries out the reaction N(2)-formyl-N(1)-(5-phospho-beta-D-ribosyl)glycinamide + L-glutamine + ATP + H2O = 2-formamido-N(1)-(5-O-phospho-beta-D-ribosyl)acetamidine + L-glutamate + ADP + phosphate + H(+). The protein operates within purine metabolism; IMP biosynthesis via de novo pathway; 5-amino-1-(5-phospho-D-ribosyl)imidazole from N(2)-formyl-N(1)-(5-phospho-D-ribosyl)glycinamide: step 1/2. Its function is as follows. Essential to the male gametophyte development. Phosphoribosylformylglycinamidine synthase involved in the purines biosynthetic pathway. Catalyzes the ATP-dependent conversion of formylglycinamide ribonucleotide (FGAR) and glutamine to yield formylglycinamidine ribonucleotide (FGAM) and glutamate. The chain is Probable phosphoribosylformylglycinamidine synthase, chloroplastic/mitochondrial from Arabidopsis thaliana (Mouse-ear cress).